Reading from the N-terminus, the 356-residue chain is Tyrosine recombinase XerS (356 aa).

One can recognise a Core-binding (CB) domain in the interval 16 to 121 (LMPWYVLEYY…ALSSLYKYLT (106 aa)). In terms of domain architecture, Tyr recombinase spans 169 to 354 (GFLTYIDQEH…VNDEQKNALD (186 aa)). Catalysis depends on residues arginine 210, lysine 234, histidine 306, arginine 309, and histidine 332. Catalysis depends on tyrosine 341, which acts as the O-(3'-phospho-DNA)-tyrosine intermediate.

The protein belongs to the 'phage' integrase family. XerS subfamily.

The protein localises to the cytoplasm. FtsK is required for recombination. Functionally, site-specific tyrosine recombinase, which acts by catalyzing the cutting and rejoining of the recombining DNA molecules. Essential to convert dimers of the bacterial chromosome into monomers to permit their segregation at cell division. This Streptococcus pneumoniae (strain P1031) protein is Tyrosine recombinase XerS.